Here is a 281-residue protein sequence, read N- to C-terminus: CMT1A duplicated region transcript 15 protein-like protein (281 aa).

Disordered stretches follow at residues K107–S131 and A150–G187. A compositionally biased stretch (basic and acidic residues) spans P108–E120. The segment covering S165–P178 has biased composition (low complexity). Residues A207–I227 traverse the membrane as a helical segment.

The protein resides in the membrane. The chain is CMT1A duplicated region transcript 15 protein-like protein (CDRT15L2) from Homo sapiens (Human).